The following is a 215-amino-acid chain: MPAFNRLFPLASLLLILWVGVCFPVCVEVPSETEAVQGNPMKLRCISCMKREEVEATTVVEWFYRPEGGKDFLIYEYRNGHQEVESPFQGRLQWNGSKDLQDVSITVLNVTLNDSGLYTCNVSREFEFEAHRPFVKTTRLIPLRVTEEAGEDFTSVVSEIMMYILLVFLTLWLLIEMIYCYRKVSKAEEAAQENASDYLAIPSENKENSAVPVEE.

An N-terminal signal peptide occupies residues 1 to 22; the sequence is MPAFNRLFPLASLLLILWVGVC. At 23–156 the chain is on the extracellular side; the sequence is FPVCVEVPSE…EEAGEDFTSV (134 aa). 2 disulfides stabilise this stretch: cysteine 26/cysteine 48 and cysteine 45/cysteine 120. In terms of domain architecture, Ig-like C2-type spans 32–154; it reads ETEAVQGNPM…VTEEAGEDFT (123 aa). Asparagine 95, asparagine 109, asparagine 113, and asparagine 121 each carry an N-linked (GlcNAc...) asparagine glycan. A helical membrane pass occupies residues 157 to 178; that stretch reads VSEIMMYILLVFLTLWLLIEMI. Residues 179-215 are Cytoplasmic-facing; sequence YCYRKVSKAEEAAQENASDYLAIPSENKENSAVPVEE.

Belongs to the sodium channel auxiliary subunit SCN3B (TC 8.A.17) family. In terms of assembly, a voltage-gated sodium (Nav) channel consists of an ion-conducting pore-forming alpha subunit functional on its own that is regulated by one or more beta subunits. Forms homodimers and homotrimers. SCN3B is non-covalently associated with alpha subunits and induces the formation of alpha subunit oligomers, including trimers. Interacts with SCN5A/Nav1.5; regulatory subunit of SCN5A/Nav1.5. Interacts with SCN7A/Nav2.1; probable regulatory subunit of SCN7A/Nav2.1. Interacts with SCN10A; regulatory subunit of SCN10A/Nav1.8. Interacts with NFASC; probably involved in targeting the sodium channels to the nodes of Ranvier. Post-translationally, intramolecular disulfide bonds favor the voltage-gated sodium channel oligomeric complex assembly. In terms of processing, N-glycosylated.

The protein localises to the cell membrane. Its function is as follows. Regulatory subunit of multiple voltage-gated sodium (Nav) channels directly mediating the depolarization of excitable membranes. Navs, also called VGSCs (voltage-gated sodium channels) or VDSCs (voltage-dependent sodium channels), operate by switching between closed and open conformations depending on the voltage difference across the membrane. In the open conformation they allow Na(+) ions to selectively pass through the pore, along their electrochemical gradient. The influx of Na+ ions provokes membrane depolarization, initiating the propagation of electrical signals throughout cells and tissues. The accessory beta subunits participate in localization and functional modulation of the Nav channels. Modulates the activity of SCN2A/Nav1.2, causing a hyperpolarizing shift in the voltage-dependence of inactivation of the channel and increasing the fraction of channels operating in the fast gating mode. Modulates the activity of SCN5A/Nav1.5. Could also regulate the atypical sodium channel SCN7A/Nav2.1. Modulates the activity of SCN10A/Nav1.8, regulating its oligomerization and accelerating the recovery from inactivation. The sequence is that of Sodium channel regulatory subunit beta-3 from Bos taurus (Bovine).